A 1124-amino-acid chain; its full sequence is MALFPRSILIALVLSFVLNLGLVTKIHAKDTLDSIIDILSGLTCETQGVGDLMRTEFSHTCIVAPFFTFAVMNLVSPVLYMNTFLKLKINDSDLFNDSDFGNFPGGQCTRANRIDPKNPELRFALCNNAKLIVSRAKSVAESALAIAKAVLTWSDPWDDIKQAWENKKKEYHIPYRGKPGDDGFAFDVGFPVIYWKVIQDRDRICVSTKGFTGDVPVGCKYMKEPFPKSIYNSFIDVEDKNFIKDPTNDTPSDPLALVSCSAAGEGCYQKAYNASKTAVVMTSPLIECIKQMIARLLISKDVCSFDNVDQVVNLSSRQDSALFQFQVGMYKIVTAFLTLYVMFFGFKLLLAGKVPPKSEYINFILKIIFVTYFSIGININPANGSQYDRLDGMIQWAFPFLLNGINGLASWVMNAAPSGLCKFNNIHYDGSVSYIALWDALDCRVAHYLGLDILSTLLVENTYRSHDFLNFDFFSFSAPPYIYLLIPAIISGNMMLVSLALSYPLLVISVAAFMVNATIMCMISIVILGILAPLFVPMFLFAYTRNYFDSWVKLMISFLLQPMVVVTFMITMFAVYDYGFYGKCQYKSKLIHNSIEDKIQGGLKSKRDVLIFYINNDWDDTSQYPDKDSVESCKNSLGYMLNNPINMAFNFAKDNISEIVNSKPGETTTDEFLSKFQFLSGVVLGPGMFFMSPKVLFEKIKNILLALVTACFTLYLMYNFSSQLAEFAADMTEGVALNNVAIKPQAIFKAAMAALSTAGTATKGIDQMASRGGGARDLGGAKGFVSDNTASSGSAVGDNIAVSRGASTPTVTTTTDSSSITNSITKTVSSDVRSDIVTPHSPTTAFSQHSSISSTIPTSVHNIKPTSIKEIVSNNRESKKEINNTMRSQEKIKSASKALGLIDYSFNLKEHDNPIGVKQIRENAEIRDKRVEVEKAWNELVASGRGRIRDQQSEATSERRTNAEKKWKELVDSGVVTEIRERDNSVTNQFDKLADELDKSKKSKVEENKNITKDIKVDNTNTLPQEKVDNTNRRSGLIDYSFNLKEHDNPIGVKQIRENAEIRDKRVKVEKAWNELVASGGGRVQEQAGVKITERRANAEKVWDELVKSGVVTEKRDNSSNENS.

The first 28 residues, 1-28 (MALFPRSILIALVLSFVLNLGLVTKIHA), serve as a signal peptide directing secretion. 7 helical membrane-spanning segments follow: residues 332-352 (IVTAFLTLYVMFFGFKLLLAG), 359-379 (EYINFILKIIFVTYFSIGINI), 393-413 (MIQWAFPFLLNGINGLASWVM), 495-515 (MLVSLALSYPLLVISVAAFMV), 522-542 (MISIVILGILAPLFVPMFLFA), 555-575 (MISFLLQPMVVVTFMITMFAV), and 700-720 (IKNILLALVTACFTLYLMYNF).

The protein belongs to the TrbL/VirB6 family.

It is found in the cell membrane. This is an uncharacterized protein from Rickettsia prowazekii (strain Madrid E).